Reading from the N-terminus, the 943-residue chain is Lactoferrin-binding protein A (943 aa).

A signal peptide spans 1–27; it reads MNKKHGFPLTLTALAIATAFPAYAAQA. A TBDR plug domain is found at 52 to 178; sequence RRSKEATGLG…LGGAVAFRTK (127 aa). Positions 189–943 constitute a TBDR beta-barrel domain; the sequence is SWGIQAKTAY…NFSLALEMKF (755 aa). The short motif at 926–943 is the TonB C-terminal box element; it reads GRYAAPGRNFSLALEMKF.

The protein belongs to the TonB-dependent receptor family.

It localises to the cell outer membrane. In terms of biological role, unknown. May be an iron-siderophore receptor. The protein is Lactoferrin-binding protein A (lbpA) of Neisseria meningitidis serogroup B (strain ATCC BAA-335 / MC58).